The primary structure comprises 289 residues: ATP synthase gamma chain (289 aa).

This sequence belongs to the ATPase gamma chain family. F-type ATPases have 2 components, CF(1) - the catalytic core - and CF(0) - the membrane proton channel. CF(1) has five subunits: alpha(3), beta(3), gamma(1), delta(1), epsilon(1). CF(0) has three main subunits: a, b and c.

It is found in the cell inner membrane. Functionally, produces ATP from ADP in the presence of a proton gradient across the membrane. The gamma chain is believed to be important in regulating ATPase activity and the flow of protons through the CF(0) complex. This Mannheimia succiniciproducens (strain KCTC 0769BP / MBEL55E) protein is ATP synthase gamma chain.